The primary structure comprises 319 residues: GTP cyclohydrolase MptA (319 aa).

This sequence belongs to the GTP cyclohydrolase IV family. Homodimer. Fe(2+) serves as cofactor.

It carries out the reaction GTP + H2O = 7,8-dihydroneopterin 2',3'-cyclic phosphate + formate + diphosphate + H(+). The protein operates within cofactor biosynthesis; 5,6,7,8-tetrahydromethanopterin biosynthesis. Its function is as follows. Converts GTP to 7,8-dihydro-D-neopterin 2',3'-cyclic phosphate, the first intermediate in the biosynthesis of coenzyme methanopterin. In Methanosarcina barkeri (strain Fusaro / DSM 804), this protein is GTP cyclohydrolase MptA.